We begin with the raw amino-acid sequence, 227 residues long: Cytochrome c oxidase subunit 2 (227 aa).

Topologically, residues 1 to 14 are mitochondrial intermembrane; the sequence is MAYPFQLGLQDATS. Residues 15-45 form a helical membrane-spanning segment; it reads PIMEELTNFHDHTLMIVFLISSLVLYIISLM. The Mitochondrial matrix segment spans residues 46–59; sequence LTTKLTHTSTMDAQ. A helical transmembrane segment spans residues 60 to 87; that stretch reads EVETIWTILPAVILILIALPSLRILYMM. Residues 88-227 lie on the Mitochondrial intermembrane side of the membrane; sequence DEINNPALTV…YFENWSASMI (140 aa). The Cu cation site is built by H161, C196, E198, C200, H204, and M207. A Mg(2+)-binding site is contributed by E198. Y218 is subject to Phosphotyrosine.

It belongs to the cytochrome c oxidase subunit 2 family. Component of the cytochrome c oxidase (complex IV, CIV), a multisubunit enzyme composed of 14 subunits. The complex is composed of a catalytic core of 3 subunits MT-CO1, MT-CO2 and MT-CO3, encoded in the mitochondrial DNA, and 11 supernumerary subunits COX4I, COX5A, COX5B, COX6A, COX6B, COX6C, COX7A, COX7B, COX7C, COX8 and NDUFA4, which are encoded in the nuclear genome. The complex exists as a monomer or a dimer and forms supercomplexes (SCs) in the inner mitochondrial membrane with NADH-ubiquinone oxidoreductase (complex I, CI) and ubiquinol-cytochrome c oxidoreductase (cytochrome b-c1 complex, complex III, CIII), resulting in different assemblies (supercomplex SCI(1)III(2)IV(1) and megacomplex MCI(2)III(2)IV(2)). Found in a complex with TMEM177, COA6, COX18, COX20, SCO1 and SCO2. Interacts with TMEM177 in a COX20-dependent manner. Interacts with COX20. Interacts with COX16. Cu cation is required as a cofactor.

The protein resides in the mitochondrion inner membrane. The catalysed reaction is 4 Fe(II)-[cytochrome c] + O2 + 8 H(+)(in) = 4 Fe(III)-[cytochrome c] + 2 H2O + 4 H(+)(out). Functionally, component of the cytochrome c oxidase, the last enzyme in the mitochondrial electron transport chain which drives oxidative phosphorylation. The respiratory chain contains 3 multisubunit complexes succinate dehydrogenase (complex II, CII), ubiquinol-cytochrome c oxidoreductase (cytochrome b-c1 complex, complex III, CIII) and cytochrome c oxidase (complex IV, CIV), that cooperate to transfer electrons derived from NADH and succinate to molecular oxygen, creating an electrochemical gradient over the inner membrane that drives transmembrane transport and the ATP synthase. Cytochrome c oxidase is the component of the respiratory chain that catalyzes the reduction of oxygen to water. Electrons originating from reduced cytochrome c in the intermembrane space (IMS) are transferred via the dinuclear copper A center (CU(A)) of subunit 2 and heme A of subunit 1 to the active site in subunit 1, a binuclear center (BNC) formed by heme A3 and copper B (CU(B)). The BNC reduces molecular oxygen to 2 water molecules using 4 electrons from cytochrome c in the IMS and 4 protons from the mitochondrial matrix. The protein is Cytochrome c oxidase subunit 2 (MT-CO2) of Oenomys hypoxanthus (Rufous-nosed rat).